We begin with the raw amino-acid sequence, 148 residues long: Transcription antitermination protein NusB (148 aa).

The protein belongs to the NusB family.

Functionally, involved in transcription antitermination. Required for transcription of ribosomal RNA (rRNA) genes. Binds specifically to the boxA antiterminator sequence of the ribosomal RNA (rrn) operons. This Desulfitobacterium hafniense (strain DSM 10664 / DCB-2) protein is Transcription antitermination protein NusB.